The chain runs to 66 residues: Large ribosomal subunit protein bL33c (66 aa).

Belongs to the bacterial ribosomal protein bL33 family.

The protein resides in the plastid. This is Large ribosomal subunit protein bL33c from Cuscuta gronovii (Common dodder).